A 309-amino-acid polypeptide reads, in one-letter code: Fructosamine-3-kinase (309 aa).

The residue at position 1 (M1) is an N-acetylmethionine. 89–91 contributes to the ATP binding site; sequence EHL. D217 (proton acceptor) is an active-site residue.

The protein belongs to the fructosamine kinase family. As to quaternary structure, monomer. Expressed in red blood cells, brain, heart, kidney and muscle. Lower expression is observed in liver. Not expressed in lung, spleen, testis and thymus.

The enzyme catalyses N(6)-(D-fructosyl)-L-lysyl-[protein] + ATP = N(6)-(3-O-phospho-D-fructosyl)-L-lysyl-[protein] + ADP + H(+). It carries out the reaction N(6)-D-ribulosyl-L-lysyl-[protein] + ATP = N(6)-(3-O-phospho-D-ribulosyl)-L-lysyl-[protein] + ADP + H(+). It catalyses the reaction N(6)-(D-psicosyl)-L-lysyl-[protein] + ATP = N(6)-(3-O-phospho-D-psicosyl)-L-lysyl-[protein] + ADP + H(+). Functionally, fructosamine-3-kinase involved in protein deglycation by mediating phosphorylation of fructoselysine residues on glycated proteins, to generate fructoselysine-3 phosphate. Fructoselysine-3 phosphate adducts are unstable and decompose under physiological conditions. Involved in intracellular deglycation in erythrocytes and pancreatic islets. Involved in the response to oxidative stress by mediating deglycation of NFE2L2/NRF2, glycation impairing NFE2L2/NRF2 function. Also able to phosphorylate psicosamines and ribulosamines. This chain is Fructosamine-3-kinase, found in Mus musculus (Mouse).